A 339-amino-acid chain; its full sequence is Tetraacyldisaccharide 4'-kinase (339 aa).

T44 to T51 is a binding site for ATP.

It belongs to the LpxK family.

It carries out the reaction a lipid A disaccharide + ATP = a lipid IVA + ADP + H(+). Its pathway is glycolipid biosynthesis; lipid IV(A) biosynthesis; lipid IV(A) from (3R)-3-hydroxytetradecanoyl-[acyl-carrier-protein] and UDP-N-acetyl-alpha-D-glucosamine: step 6/6. Functionally, transfers the gamma-phosphate of ATP to the 4'-position of a tetraacyldisaccharide 1-phosphate intermediate (termed DS-1-P) to form tetraacyldisaccharide 1,4'-bis-phosphate (lipid IVA). The chain is Tetraacyldisaccharide 4'-kinase from Bdellovibrio bacteriovorus (strain ATCC 15356 / DSM 50701 / NCIMB 9529 / HD100).